Here is a 462-residue protein sequence, read N- to C-terminus: DIMBOA UDP-glucosyltransferase BX9 (462 aa).

The active-site Proton acceptor is the histidine 24. An an anthocyanidin-binding site is contributed by histidine 24. Aspartate 115 functions as the Charge relay in the catalytic mechanism. UDP-alpha-D-glucose contacts are provided by threonine 137, alanine 336, glutamine 338, histidine 353, tryptophan 356, asparagine 357, serine 358, and glutamate 361. Glycine 376 is a binding site for an anthocyanidin. Residues aspartate 377 and glutamine 378 each coordinate UDP-alpha-D-glucose.

This sequence belongs to the UDP-glycosyltransferase family. Requires Mg(2+) as cofactor. Ca(2+) serves as cofactor. In terms of tissue distribution, expressed at the same levels in roots and shoots.

The catalysed reaction is DIMBOA + UDP-alpha-D-glucose = DIMBOA beta-D-glucoside + UDP + H(+). It carries out the reaction DIBOA + UDP-alpha-D-glucose = DIBOA beta-D-glucoside + UDP + H(+). In terms of biological role, glucosyltransferase involved in the last step of benzoxazinoid glucoside biosynthesis. Catalyzes the glucosylation of hydroxamic acids utilizing UDP-glucose as glucose doner, reducing the toxicity of these natural insecticides for storage. Can use DIMBOA and DIBOA as substrates, HMBOA (2-hydroxy-7-methoxy-2H-1,4-benzoxazin-3(4H)-one) and HBOA (2-hydroxy-2H-1,4-benzoxazin-3(4H)-one) with a lower efficiency, but not indole acetic acid or quercitin. The protein is DIMBOA UDP-glucosyltransferase BX9 (BX9) of Zea mays (Maize).